Consider the following 802-residue polypeptide: Lon protease (802 aa).

Residues 17–211 (SIVMPLFEVV…LFLHILTKHK (195 aa)) form the Lon N-terminal domain. Residue 363–370 (GPPGTGKT) participates in ATP binding. One can recognise a Lon proteolytic domain in the interval 600–780 (ENVPGVVTGL…EEVLREALDI (181 aa)). Active-site residues include Ser686 and Lys729.

Belongs to the peptidase S16 family. Homohexamer. Organized in a ring with a central cavity.

Its subcellular location is the cytoplasm. The enzyme catalyses Hydrolysis of proteins in presence of ATP.. In terms of biological role, ATP-dependent serine protease that mediates the selective degradation of mutant and abnormal proteins as well as certain short-lived regulatory proteins. Required for cellular homeostasis and for survival from DNA damage and developmental changes induced by stress. Degrades polypeptides processively to yield small peptide fragments that are 5 to 10 amino acids long. Binds to DNA in a double-stranded, site-specific manner. The chain is Lon protease from Methanosarcina barkeri (strain Fusaro / DSM 804).